The primary structure comprises 621 residues: KIF-binding protein (621 aa).

Serine 178 carries the phosphoserine modification.

It belongs to the KIF-binding protein family. As to quaternary structure, interacts with KIF1B; positively regulates KIF1B microtubule motor activity. Interacts with STMN2.

It is found in the cytoplasm. It localises to the cytoskeleton. In terms of biological role, activator of KIF1B plus-end-directed microtubule motor activity. Required for organization of axonal microtubules, and axonal outgrowth and maintenance during peripheral and central nervous system development. The chain is KIF-binding protein (KIFBP) from Bos taurus (Bovine).